The chain runs to 611 residues: Putative clathrin assembly protein At4g02650 (611 aa).

The 137-residue stretch at G26 to K162 folds into the ENTH domain. Disordered stretches follow at residues G158 to T184 and T337 to L406. A compositionally biased stretch (basic and acidic residues) spans M386–Q401.

It is found in the membrane. The protein localises to the clathrin-coated pit. The protein resides in the golgi apparatus. Its subcellular location is the cytoplasmic vesicle. It localises to the clathrin-coated vesicle. This is Putative clathrin assembly protein At4g02650 from Arabidopsis thaliana (Mouse-ear cress).